A 936-amino-acid chain; its full sequence is Isoleucine--tRNA ligase (936 aa).

The short motif at 58-68 is the 'HIGH' region element; that stretch reads PYANGRAHLGT. Residue E561 participates in L-isoleucyl-5'-AMP binding. A 'KMSKS' region motif is present at residues 602-606; the sequence is KMSKS. K605 serves as a coordination point for ATP. Residues C899, C902, C919, and C922 each contribute to the Zn(2+) site.

Belongs to the class-I aminoacyl-tRNA synthetase family. IleS type 1 subfamily. Monomer. Zn(2+) is required as a cofactor.

The protein resides in the cytoplasm. The enzyme catalyses tRNA(Ile) + L-isoleucine + ATP = L-isoleucyl-tRNA(Ile) + AMP + diphosphate. Catalyzes the attachment of isoleucine to tRNA(Ile). As IleRS can inadvertently accommodate and process structurally similar amino acids such as valine, to avoid such errors it has two additional distinct tRNA(Ile)-dependent editing activities. One activity is designated as 'pretransfer' editing and involves the hydrolysis of activated Val-AMP. The other activity is designated 'posttransfer' editing and involves deacylation of mischarged Val-tRNA(Ile). In Coxiella burnetii (strain Dugway 5J108-111), this protein is Isoleucine--tRNA ligase.